The chain runs to 163 residues: ADP-ribosylation factor-like protein 2-binding protein (163 aa).

This sequence belongs to the ARL2BP family. In terms of assembly, interacts with GTP bound ARL2 and ARL3; the complex ARL2-ARL2BP as well as ARL2BP alone, binds to SLC25A4/ANT1. Interaction with ARL2 may be required for cilia basal body localization. Interacts with STAT3; interaction is enhanced with ARL2. Found in a complex with ARL2BP, ARL2 and SLC25A6. Found in a complex with ARL2, ARL2BP and SLC25A4. Interacts with STAT2, STAT3 and STAT4.

It is found in the cytoplasm. The protein localises to the mitochondrion intermembrane space. It localises to the cytoskeleton. Its subcellular location is the microtubule organizing center. The protein resides in the centrosome. It is found in the nucleus. The protein localises to the spindle. It localises to the cilium basal body. In terms of biological role, together with ARL2, plays a role in the nuclear translocation, retention and transcriptional activity of STAT3. May play a role as an effector of ARL2. This Pongo abelii (Sumatran orangutan) protein is ADP-ribosylation factor-like protein 2-binding protein (ARL2BP).